The chain runs to 158 residues: SsrA-binding protein (158 aa).

It belongs to the SmpB family.

It is found in the cytoplasm. Its function is as follows. Required for rescue of stalled ribosomes mediated by trans-translation. Binds to transfer-messenger RNA (tmRNA), required for stable association of tmRNA with ribosomes. tmRNA and SmpB together mimic tRNA shape, replacing the anticodon stem-loop with SmpB. tmRNA is encoded by the ssrA gene; the 2 termini fold to resemble tRNA(Ala) and it encodes a 'tag peptide', a short internal open reading frame. During trans-translation Ala-aminoacylated tmRNA acts like a tRNA, entering the A-site of stalled ribosomes, displacing the stalled mRNA. The ribosome then switches to translate the ORF on the tmRNA; the nascent peptide is terminated with the 'tag peptide' encoded by the tmRNA and targeted for degradation. The ribosome is freed to recommence translation, which seems to be the essential function of trans-translation. In Acinetobacter baumannii (strain AB307-0294), this protein is SsrA-binding protein.